The sequence spans 267 residues: Transcription factor LBX1 (267 aa).

Residues 1 to 21 show a composition bias toward basic and acidic residues; it reads MTSKDEAKSSASSVEERRRNA. The segment at 1-36 is disordered; the sequence is MTSKDEAKSSASSVEERRRNALDLLPPPANSNKPLT. The homeobox DNA-binding region spans 127 to 186; the sequence is RRKSRTAFTNHQIYELEKRFLYQKYLSPADRDQIAQQLGLTNAQVITWFQNRRAKLKRDL. Residues 211–267 form a disordered region; it reads SELEESGSERGNSRSRSPQLGLTSNHMPLSPSXPLTDQHASKECSEDEEDVEIDVDD. A compositionally biased stretch (polar residues) spans 228–237; that stretch reads PQLGLTSNHM. Acidic residues predominate over residues 255 to 267; sequence SEDEEDVEIDVDD.

Expressed in all myoblasts that will populate body wall muscles as well as in a group of cells the migrate into the head.

The protein localises to the nucleus. In terms of biological role, transcription factor that controls hypaxial muscle development by down-regulating myod1 and cdkn1b/p27, thereby allowing myoblasts to proliferate before the onset of terminal differentiation. The sequence is that of Transcription factor LBX1 from Xenopus laevis (African clawed frog).